A 488-amino-acid chain; its full sequence is UDP-GalNAc:beta-1,3-N-acetylgalactosaminyltransferase 2 (488 aa).

Topologically, residues 1–2 (MR) are cytoplasmic. Residues 3–23 (HLLLLFLCPCAIGVAFHLWLF) traverse the membrane as a helical; Signal-anchor for type II membrane protein segment. Residues asparagine 24, asparagine 105, and asparagine 162 are each glycosylated (N-linked (GlcNAc...) asparagine). Residues 24 to 488 (NFSGLFTWFP…CGNPCACEDR (465 aa)) are Lumenal-facing.

This sequence belongs to the glycosyltransferase 31 family.

It localises to the golgi apparatus membrane. It is found in the endoplasmic reticulum. It carries out the reaction 3-O-(N-acetyl-beta-D-glucosaminyl-(1-&gt;4)-alpha-D-mannosyl)-L-threonyl-[protein] + UDP-N-acetyl-alpha-D-galactosamine = 3-O-[beta-D-GalNAc-(1-&gt;3)-beta-D-GlcNAc-(1-&gt;4)-alpha-D-Man]-L-Thr-[protein] + UDP + H(+). The protein operates within protein modification; protein glycosylation. In terms of biological role, beta-1,3-N-acetylgalactosaminyltransferase that synthesizes a unique carbohydrate structure, GalNAc-beta-1-3GlcNAc, on N- and O-glycans. Has no galactose nor galactosaminyl transferase activity toward any acceptor substrate. Involved in alpha-dystroglycan (dag1) glycosylation. This is UDP-GalNAc:beta-1,3-N-acetylgalactosaminyltransferase 2 (b3galnt2) from Xenopus tropicalis (Western clawed frog).